The sequence spans 175 residues: NADH-quinone oxidoreductase subunit I 1 (175 aa).

2 4Fe-4S ferredoxin-type domains span residues 44–74 and 90–119; these read LNRWPDGLEKCIGCELCAWACPADAIFVESA and RVYQINYLRCIGCGFCIEACPTRALTMIND. Residues C54, C57, C60, C64, C99, C102, C105, and C109 each coordinate [4Fe-4S] cluster.

The protein belongs to the complex I 23 kDa subunit family. NDH-1 is composed of 14 different subunits. Subunits NuoA, H, J, K, L, M, N constitute the membrane sector of the complex. The cofactor is [4Fe-4S] cluster.

The protein localises to the cell membrane. It carries out the reaction a quinone + NADH + 5 H(+)(in) = a quinol + NAD(+) + 4 H(+)(out). Functionally, NDH-1 shuttles electrons from NADH, via FMN and iron-sulfur (Fe-S) centers, to quinones in the respiratory chain. The immediate electron acceptor for the enzyme in this species is believed to be menaquinone. Couples the redox reaction to proton translocation (for every two electrons transferred, four hydrogen ions are translocated across the cytoplasmic membrane), and thus conserves the redox energy in a proton gradient. The polypeptide is NADH-quinone oxidoreductase subunit I 1 (Mycolicibacterium paratuberculosis (strain ATCC BAA-968 / K-10) (Mycobacterium paratuberculosis)).